A 100-amino-acid chain; its full sequence is Probable DNA-binding protein HU (100 aa).

This sequence belongs to the bacterial histone-like protein family.

Its function is as follows. Histone-like DNA-binding protein which is capable of wrapping DNA to stabilize it, and thus to prevent its denaturation under extreme environmental conditions. This Chlamydia pneumoniae (Chlamydophila pneumoniae) protein is Probable DNA-binding protein HU (hup).